Consider the following 274-residue polypeptide: MAIHLYKTSTPSTRNRTVDSRVKSNPRNNLIYGQHRCGKGRNARGIITAGHRGGGHKRLYRKIDFRRNEKDIYGRIVTIEYDPNRNAYICLIHYGDGEKRYILHPRGAIIGDTIVSGTEVPIKMGNALPLTDMPLGTAIHNIEITRGRGGQLARAAGAVAKLIAKEGKSATLKLPSGEVRLISKNCSATVGQVGNVGVNQKSLGRAGSKRWLGKRPVVRGVVMNPVDHPHGGGEGRAPIGRKKPTTPWGYPALGRRSRKRNKYSDNLILRRRSK.

Disordered stretches follow at residues 1–26 (MAIH…KSNP) and 223–274 (MNPV…RRSK).

This sequence belongs to the universal ribosomal protein uL2 family. As to quaternary structure, part of the 50S ribosomal subunit.

The protein resides in the plastid. The protein localises to the chloroplast. This chain is Large ribosomal subunit protein uL2cz/uL2cy (rpl2-A), found in Daucus carota (Wild carrot).